We begin with the raw amino-acid sequence, 842 residues long: Translation initiation factor IF-2 (842 aa).

The interval 94-259 (QRSPEEIQAE…HGFQNPTGPV (166 aa)) is disordered. Residues 96-138 (SPEEIQAEQKRELDERRAAENAARDKVEAEVRQRNEEQARRQA) show a composition bias toward basic and acidic residues. Residues 139-148 (ADSAVAAPAP) show a composition bias toward low complexity. Pro residues predominate over residues 149-159 (AAKPEPAPAAA). Over residues 160 to 172 (PAPVVADAPASED) the composition is skewed to low complexity. Basic and acidic residues-rich tracts occupy residues 173 to 202 (AAAR…RGEA) and 226 to 235 (TTDEESDGAR). A compositionally biased stretch (basic residues) spans 236 to 249 (RGRGGKGKLKKRNQ). Residues 342–509 (SRAPVVTVMG…AVLLQAEILE (168 aa)) form the tr-type G domain. Residues 351–358 (GHVDHGKT) form a G1 region. 351 to 358 (GHVDHGKT) serves as a coordination point for GTP. A G2 region spans residues 376-380 (GITQH). Residues 397 to 400 (DTPG) form a G3 region. GTP contacts are provided by residues 397 to 401 (DTPGH) and 451 to 454 (NKID). A G4 region spans residues 451 to 454 (NKID). The interval 487–489 (SAK) is G5.

The protein belongs to the TRAFAC class translation factor GTPase superfamily. Classic translation factor GTPase family. IF-2 subfamily.

It is found in the cytoplasm. Functionally, one of the essential components for the initiation of protein synthesis. Protects formylmethionyl-tRNA from spontaneous hydrolysis and promotes its binding to the 30S ribosomal subunits. Also involved in the hydrolysis of GTP during the formation of the 70S ribosomal complex. This chain is Translation initiation factor IF-2, found in Pseudomonas putida (strain GB-1).